Here is a 1446-residue protein sequence, read N- to C-terminus: Receptor-type tyrosine-protein phosphatase U (1446 aa).

The N-terminal stretch at 1 to 18 is a signal peptide; sequence MARAQALVLALTFQFCAP. The Extracellular portion of the chain corresponds to 19–749; sequence ETETPAAGCT…QRSEEMGLIL (731 aa). Positions 25–188 constitute an MAM domain; sequence AGCTFEEASD…ILLFSYPCAK (164 aa). N-linked (GlcNAc...) asparagine glycosylation occurs at N75. In terms of domain architecture, Ig-like C2-type spans 190 to 275; sequence PHFSRLGDVE…SQAPRGAGVS (86 aa). A disulfide bond links C210 and C264. 4 Fibronectin type-III domains span residues 288–383, 386–484, 485–591, and 592–668; these read PIAP…CAEP, APKG…TDED, VPGG…SAPS, and FDYA…FGAE. N-linked (GlcNAc...) asparagine glycosylation occurs at N410. N685 carries an N-linked (GlcNAc...) asparagine glycan. A helical membrane pass occupies residues 750-770; it reads GICAGGLAVLILLLGAIIVII. The segment at 771-887 is mediates interaction with CTNNB1; that stretch reads RKGRDRYAYS…DLLQHINQMK (117 aa). Residues 771–1446 lie on the Cytoplasmic side of the membrane; that stretch reads RKGRDRYAYS…LEYLEALELR (676 aa). Positions 830-867 are disordered; the sequence is PGYSPRGDQRSGGVTEASSLLGGSPRRPCGRKGSPYHT. A phosphoserine mark is found at S848, S853, and S863. A Phosphotyrosine modification is found at Y865. Tyrosine-protein phosphatase domains follow at residues 888–1144 and 1176–1439; these read TAEG…ILEA and LREE…ALEY. Substrate contacts are provided by residues E1053, 1085-1091, and Q1129; that span reads CSAGTGR. C1085 functions as the Phosphocysteine intermediate in the catalytic mechanism. C1380 functions as the Phosphocysteine intermediate in the catalytic mechanism.

It belongs to the protein-tyrosine phosphatase family. Receptor class 2B subfamily. In terms of assembly, forms homooligomeric complexes which mediate cell homotypic adhesion. Interacts (via the cytoplasmic juxtamembrane domain) with CTNNB1; may mediate interaction with the cadherin/catenin adhesion complex. Interacts with KIT. May interact with AP3B1. In terms of processing, the extracellular domain is proteolytically processed through cleavage within the fibronectin type-III 4 domain. In addition to the 190 kDa full-length protein, proteolytic products of 100 kDa, 80 kDa and 73 kDa are observed. Post-translationally, N-glycosylated. Phosphorylated on tyrosine residues upon activation of KIT with stem cell factor (SCF). The 73 kDa proteolytic product is not phosphorylated. As to expression, transcripts of different sizes are differentially expressed in a subset of tissues. Detected in brain, lung, skeletal muscle, heart, kidney and placenta. In brain; expressed in olfactory bulb, cerebral cortex, hippocampus and cerebellum.

The protein resides in the cell junction. Its subcellular location is the cell membrane. It carries out the reaction O-phospho-L-tyrosyl-[protein] + H2O = L-tyrosyl-[protein] + phosphate. Functionally, tyrosine-protein phosphatase which dephosphorylates CTNNB1. Regulates CTNNB1 function both in cell adhesion and signaling. May function in cell proliferation and migration and play a role in the maintenance of epithelial integrity. May play a role in megakaryocytopoiesis. The sequence is that of Receptor-type tyrosine-protein phosphatase U (Ptpru) from Mus musculus (Mouse).